Consider the following 94-residue polypeptide: Cell division topological specificity factor (94 aa).

Belongs to the MinE family.

In terms of biological role, prevents the cell division inhibition by proteins MinC and MinD at internal division sites while permitting inhibition at polar sites. This ensures cell division at the proper site by restricting the formation of a division septum at the midpoint of the long axis of the cell. In Synechococcus sp. (strain CC9311), this protein is Cell division topological specificity factor.